The chain runs to 319 residues: Coproporphyrin III ferrochelatase 2 (319 aa).

Fe-coproporphyrin III-binding positions include Tyr-13, Arg-30, 46–47 (RY), Ser-54, and Tyr-125. The Fe(2+) site is built by His-181 and Glu-262.

This sequence belongs to the ferrochelatase family.

It is found in the cytoplasm. It catalyses the reaction Fe-coproporphyrin III + 2 H(+) = coproporphyrin III + Fe(2+). It functions in the pathway porphyrin-containing compound metabolism; protoheme biosynthesis. Involved in coproporphyrin-dependent heme b biosynthesis. Catalyzes the insertion of ferrous iron into coproporphyrin III to form Fe-coproporphyrin III. In Bacillus anthracis, this protein is Coproporphyrin III ferrochelatase 2.